The following is a 484-amino-acid chain: UDP-N-acetylmuramate--L-alanine ligase (484 aa).

An ATP-binding site is contributed by 126 to 132; the sequence is GTHGKTT.

The protein belongs to the MurCDEF family.

The protein resides in the cytoplasm. It carries out the reaction UDP-N-acetyl-alpha-D-muramate + L-alanine + ATP = UDP-N-acetyl-alpha-D-muramoyl-L-alanine + ADP + phosphate + H(+). Its pathway is cell wall biogenesis; peptidoglycan biosynthesis. In terms of biological role, cell wall formation. The polypeptide is UDP-N-acetylmuramate--L-alanine ligase (Tolumonas auensis (strain DSM 9187 / NBRC 110442 / TA 4)).